The following is a 341-amino-acid chain: Small ribosomal subunit protein uS3 (341 aa).

The KH type-2 domain maps to 38 to 106; it reads IRRMMTRGME…QVQLNILEVK (69 aa). Disordered regions lie at residues 224–246 and 274–341; these read RAVR…LETA and PAGQ…TKEG. 2 stretches are compositionally biased toward low complexity: residues 285–303 and 311–333; these read AEQP…VTGE and AAPA…DAPS.

The protein belongs to the universal ribosomal protein uS3 family. In terms of assembly, part of the 30S ribosomal subunit. Forms a tight complex with proteins S10 and S14.

Binds the lower part of the 30S subunit head. Binds mRNA in the 70S ribosome, positioning it for translation. The polypeptide is Small ribosomal subunit protein uS3 (Acidothermus cellulolyticus (strain ATCC 43068 / DSM 8971 / 11B)).